An 800-amino-acid polypeptide reads, in one-letter code: Phenylalanine--tRNA ligase beta subunit (800 aa).

Residues Thr39–Leu154 enclose the tRNA-binding domain. The B5 domain maps to Cys408–Ser483. Positions 461, 467, 470, and 471 each coordinate Mg(2+). The region spanning Pro708–Arg800 is the FDX-ACB domain.

It belongs to the phenylalanyl-tRNA synthetase beta subunit family. Type 1 subfamily. In terms of assembly, tetramer of two alpha and two beta subunits. Mg(2+) serves as cofactor.

The protein localises to the cytoplasm. The catalysed reaction is tRNA(Phe) + L-phenylalanine + ATP = L-phenylalanyl-tRNA(Phe) + AMP + diphosphate + H(+). The protein is Phenylalanine--tRNA ligase beta subunit of Staphylococcus saprophyticus subsp. saprophyticus (strain ATCC 15305 / DSM 20229 / NCIMB 8711 / NCTC 7292 / S-41).